Consider the following 314-residue polypeptide: Acetyl-coenzyme A carboxylase carboxyl transferase subunit alpha (314 aa).

Residues 32–289 enclose the CoA carboxyltransferase C-terminal domain; that stretch reads EIDMLEASLK…KKMFLKHLNE (258 aa).

Belongs to the AccA family. In terms of assembly, acetyl-CoA carboxylase is a heterohexamer composed of biotin carboxyl carrier protein (AccB), biotin carboxylase (AccC) and two subunits each of ACCase subunit alpha (AccA) and ACCase subunit beta (AccD).

The protein localises to the cytoplasm. The catalysed reaction is N(6)-carboxybiotinyl-L-lysyl-[protein] + acetyl-CoA = N(6)-biotinyl-L-lysyl-[protein] + malonyl-CoA. Its pathway is lipid metabolism; malonyl-CoA biosynthesis; malonyl-CoA from acetyl-CoA: step 1/1. Functionally, component of the acetyl coenzyme A carboxylase (ACC) complex. First, biotin carboxylase catalyzes the carboxylation of biotin on its carrier protein (BCCP) and then the CO(2) group is transferred by the carboxyltransferase to acetyl-CoA to form malonyl-CoA. In Staphylococcus epidermidis (strain ATCC 12228 / FDA PCI 1200), this protein is Acetyl-coenzyme A carboxylase carboxyl transferase subunit alpha.